Consider the following 357-residue polypeptide: Protein RecA (357 aa).

Glycine 73–threonine 80 is a binding site for ATP.

It belongs to the RecA family.

It localises to the cytoplasm. Can catalyze the hydrolysis of ATP in the presence of single-stranded DNA, the ATP-dependent uptake of single-stranded DNA by duplex DNA, and the ATP-dependent hybridization of homologous single-stranded DNAs. It interacts with LexA causing its activation and leading to its autocatalytic cleavage. This is Protein RecA from Nitratidesulfovibrio vulgaris (strain DSM 19637 / Miyazaki F) (Desulfovibrio vulgaris).